The primary structure comprises 604 residues: MVELEKRRRPPPQLQHSPYVRDQSNSQGMTKTPETSPPKRPMGRARSNSRSSGSRSNVDIDQYTIPPGLDLLPTASSPPSVHQVSQQQQLSPILANKIRSPFENQSQDQNDNSIDPTPAGQVTIPVEAVSPPALDELSKFQNGSTETLFRTGSPRKKHTHIIILKSLNATFETKFLVVPFKPDGLKLGRPVTNSVNKNNSGSKRDLFSQQVRPDNGNFDSRVLSRNHACLSCDPTSGKIYIRDLKSSNGTFVNGVKIRQNDVELKVGDTVDLGTDIDSKFEHRKISAYVEEISVIPLMNTVSDPTNLVMKKQDHTNKNNGNSTNINGIKIDRGHHNQHIPIRSHLKENYTEAGVTSATTAQRAAFEAAMFGDINNSELDDDILGPETEVLSGIFINNSAGTSINLINMIKTLTTELSLEKQELEKLHSMQNFMQNYTINLDFINKHMIDMNEKHLLKLSTALQKTLSENNDALLKESEDQLKEIKQQNNKVKSACSLKEKQNHEKLQELESELRELNLQIEEERGKNLVLTQSNFNGGINNDNNAKVKQNDSREEKKDTEDTLISTEELGVVEGKRTRVSKGMLFGVVAISFGLVATAVKQLPQ.

The disordered stretch occupies residues 1–89; that stretch reads MVELEKRRRP…SVHQVSQQQQ (89 aa). Over 1-578 the chain is Cytoplasmic; it reads MVELEKRRRP…LGVVEGKRTR (578 aa). A compositionally biased stretch (polar residues) spans 22-34; it reads DQSNSQGMTKTPE. 2 stretches are compositionally biased toward low complexity: residues 44-57 and 77-89; these read RARS…SRSN and SPPS…QQQQ. Residues 185–257 enclose the FHA domain; that stretch reads LKLGRPVTNS…NGTFVNGVKI (73 aa). Positions 404 to 563 form a coiled coil; that stretch reads NLINMIKTLT…EEKKDTEDTL (160 aa). The disordered stretch occupies residues 539–561; the sequence is INNDNNAKVKQNDSREEKKDTED. The segment covering 548–560 has biased composition (basic and acidic residues); that stretch reads KQNDSREEKKDTE. A helical; Anchor for type IV membrane protein transmembrane segment spans residues 579–598; the sequence is VSKGMLFGVVAISFGLVATA. Over 599 to 604 the chain is Lumenal; it reads VKQLPQ.

In terms of assembly, component of a complex at least composed of FAR3, FAR7, FAR8, FAR10, FAR11 and VPS64.

Its subcellular location is the endoplasmic reticulum membrane. In terms of biological role, participates in the control of the reentry into the cell cycle following pheromone treatment. Involved in vacuolar protein sorting. The chain is Vacuolar protein sorting-associated protein 64 (VPS64) from Saccharomyces cerevisiae (strain ATCC 204508 / S288c) (Baker's yeast).